An 89-amino-acid polypeptide reads, in one-letter code: MSITAERKSALIKEYATVEGDTGSPEVQVAILTERINNLTEHFKDHKKDNHSRRGLLTMVSSRRSLLDYLKKKDEGRYSKLITSLGIRR.

Belongs to the universal ribosomal protein uS15 family. In terms of assembly, part of the 30S ribosomal subunit. Forms a bridge to the 50S subunit in the 70S ribosome, contacting the 23S rRNA.

Its function is as follows. One of the primary rRNA binding proteins, it binds directly to 16S rRNA where it helps nucleate assembly of the platform of the 30S subunit by binding and bridging several RNA helices of the 16S rRNA. Functionally, forms an intersubunit bridge (bridge B4) with the 23S rRNA of the 50S subunit in the ribosome. The chain is Small ribosomal subunit protein uS15 from Rhizobium johnstonii (strain DSM 114642 / LMG 32736 / 3841) (Rhizobium leguminosarum bv. viciae).